A 458-amino-acid polypeptide reads, in one-letter code: Elongation factor 1-alpha (458 aa).

Gly-2 carries the n,N,N-trimethylglycine; by EFM7 modification. Lys-3 is modified (N6,N6-dimethyllysine; by EFM7; alternate). Lys-3 carries the post-translational modification N6-methyllysine; by EFM7; alternate. In terms of domain architecture, tr-type G spans 5-240 (KSHINVVVIG…DAIEQPSRPT (236 aa)). The G1 stretch occupies residues 14–21 (GHVDSGKS). Residue Ser-18 is modified to Phosphoserine. Residues Ser-21 and Thr-22 each coordinate GTP. Lys-30 carries the post-translational modification N6-methyllysine; by EFM1. The tract at residues 70-74 (GITID) is G2. Phosphothreonine is present on Thr-72. Lys-79 is subject to N6,N6,N6-trimethyllysine; by EFM5. Position 82 is a phosphothreonine (Thr-82). The G3 stretch occupies residues 91–94 (DAPG). Residues Asn-153, Lys-154, and Asp-156 each coordinate GTP. The segment at 153 to 156 (NKMD) is G4. Ser-163 carries the post-translational modification Phosphoserine. GTP contacts are provided by Ser-192, Gly-193, and Trp-194. The tract at residues 192–194 (SGW) is G5. Residues Lys-224, Lys-242, and Lys-253 each participate in a glycyl lysine isopeptide (Lys-Gly) (interchain with G-Cter in ubiquitin) cross-link. Residue Thr-259 is modified to Phosphothreonine. Lys-271 is covalently cross-linked (Glycyl lysine isopeptide (Lys-Gly) (interchain with G-Cter in ubiquitin)). At Ser-289 the chain carries Phosphoserine. Residue Lys-316 is modified to N6,N6-dimethyllysine; by EFM4; alternate. An N6-methyllysine; by EFM4; alternate modification is found at Lys-316. Lys-390 is subject to N6-methyllysine; by EFM6. Lys-393 participates in a covalent cross-link: Glycyl lysine isopeptide (Lys-Gly) (interchain with G-Cter in ubiquitin). Position 414 is a phosphoserine (Ser-414). Thr-430 carries the post-translational modification Phosphothreonine. Lys-437 participates in a covalent cross-link: Glycyl lysine isopeptide (Lys-Gly) (interchain with G-Cter in ubiquitin). A Lysine methyl ester modification is found at Lys-458.

This sequence belongs to the TRAFAC class translation factor GTPase superfamily. Classic translation factor GTPase family. EF-Tu/EF-1A subfamily. The eukaryotic elongation factor 1 complex (eEF1) is probably a heterohexamer. Two trimeric complexes, each composed of eEF1A (TEF1 or TEF2), eEF1Balpha (EFB1) and eEF1Bgamma (CAM1 or TEF4), are probably dimerized via the eF1Bgamma subunits. Interacts with eEF1Balpha; the interaction is direct. Interacts with GCN2 (via C-terminus); this interaction is direct, occurs in amino acid-repleted cells, may be stabilized in a ribosome-dependent manner, reduces GCN2-mediated eIF-2-alpha phosphorylation and is lost in amino acid-starved cells and by uncharged tRNAs. Interacts with CEX1. Interacts with elongation factor 3 (YEF3 or HEF3). Interacts with NAP1. Interacts with SRV2. Interacts with chaperone ZPR1; the interaction is required for its proper folding. Binds to actin and forms a ternary complex with BNI1 and profilin. Interacts with the proteasome, probably via RPT1. Associates with ribosomes. S-thiolated in response to oxidative stress, probably inhibiting the protein and causing a reduction in protein synthesis. Post-translationally, glutaminylated at Glu-45. An L-glutamine is linked to Glu-45 via the alpha amino group. This glutaminylation is yeast-specific and not essential for the normal functions of eEF1A. However, eEF1A glutaminylation slightly reduced growth under antibiotic-induced translational stress conditions.

The protein resides in the cytoplasm. Its subcellular location is the cytoskeleton. The protein operates within protein biosynthesis; polypeptide chain elongation. Its activity is regulated as follows. Inhibited by narciclasine. Functionally, GTP-binding component of the eukaryotic elongation factor 1 complex (eEF1). In its active GTP-bound form, binds to and delivers aminoacyl-tRNA to the A-site of ribosomes during protein biosynthesis. In the presence of a correct codon-anticodon match between the aminoacyl-tRNA and the A-site codon of the ribosome-bound mRNA, the ribosome acts as a GTPase activator and the GTP is hydrolyzed. The inactive GDP-bound form leaves the ribosome and must be recycled by its guanine nucleotide exchange factor (GEF) (eEF1B subcomplex) before binding another molecule of aminoacyl-tRNA. Required for nuclear export of aminoacyl-tRNAs. May also be involved in translational quality control by targeting cotranslationally damaged proteins to the proteasome. Also exhibits actin filament-binding and -bundling activities and is involved in cytoskeleton organization. Plays a role as a negative regulator of GCN2 kinase activity by inhibiting GCN2-mediated eIF-2-alpha phosphorylation in amino acid-repleted cells. This is Elongation factor 1-alpha (TEF1) from Saccharomyces cerevisiae (strain ATCC 204508 / S288c) (Baker's yeast).